Here is a 350-residue protein sequence, read N- to C-terminus: NAD-dependent protein deacetylase sirtuin-2 (350 aa).

The Nuclear export signal signature appears at 4 to 14 (LRNLFTQTLGL). At serine 16 the chain carries Phosphoserine. One can recognise a Deacetylase sirtuin-type domain in the interval 20–301 (RLLDELTLEG…LALADLLGWK (282 aa)). NAD(+) contacts are provided by residues 48 to 52 (AGIST) and 58 to 60 (DFR). Phosphoserine is present on serine 63. 130 to 133 (QNID) serves as a coordination point for NAD(+). Histidine 150 (proton acceptor) is an active-site residue. The Zn(2+) site is built by cysteine 158 and cysteine 163. At serine 170 the chain carries Phosphoserine. 2 residues coordinate Zn(2+): cysteine 184 and cysteine 187. NAD(+)-binding positions include 225-226 (TS), 249-251 (NKE), and cysteine 287. The segment at 312 to 350 (ANIDAQSGSQASNPSATVSPRKSPPPAKEAARTKEKEEH) is disordered. Over residues 315-331 (DAQSGSQASNPSATVSP) the composition is skewed to polar residues. Serine 330 and serine 334 each carry phosphoserine. Residues 340–350 (EAARTKEKEEH) show a composition bias toward basic and acidic residues.

This sequence belongs to the sirtuin family. Class I subfamily. In terms of assembly, interacts with CDC20, FOXO3 and FZR1. Associates with microtubules in primary cortical mature neurons. Homotrimer. Interacts (via both phosphorylated, unphosphorylated, active or inactive forms) with HDAC6; the interaction is necessary for the complex to interact with alpha-tubulin, suggesting that these proteins belong to a large complex that deacetylates the cytoskeleton. Interacts with FOXO1; the interaction is disrupted upon serum-starvation or oxidative stress, leading to increased level of acetylated FOXO1 and induction of autophagy. Interacts with RELA; the interaction occurs in the cytoplasm and is increased in a TNF-alpha-dependent manner. Interacts with HOXA10; the interaction is direct. Interacts with YWHAB and YWHAG; the interactions occur in a AKT-dependent manner and increase SIRT2-dependent TP53 deacetylation. Interacts with MAPK1/ERK2 and MAPK3/ERK1; the interactions increase SIRT2 stability and deacetylation activity. Interacts (phosphorylated form) with KMT5A isoform 2; the interaction is direct, stimulates KMT5A-mediated methyltransferase activity on histone at 'Lys-20' (H4K20me1) and is increased in a H(2)O(2)-induced oxidative stress-dependent manner. Interacts with G6PD; the interaction is enhanced by H(2)O(2) treatment. Interacts with a G1/S-specific cyclin E-CDK2 complex. Interacts with AURKA, CDK5R1 (p35 form) and CDK5 and HIF1A. Interacts with the tRNA ligase SARS1; recruited to the VEGFA promoter via interaction with SARS1. Interacts with BEX4; negatively regulates alpha-tubulin deacetylation by SIRT2. Zn(2+) serves as cofactor. In terms of processing, phosphorylated at phosphoserine and phosphothreonine. Phosphorylated at Ser-330 by a mitotic kinase CDK1/cyclin B at the G2/M transition; phosphorylation regulates the delay in cell-cycle progression. Phosphorylated at Ser-330 by a mitotic kinase G1/S-specific cyclin E/Cdk2 complex; phosphorylation inactivates SIRT2-mediated alpha-tubulin deacetylation and thereby negatively regulates cell adhesion, cell migration and neurite outgrowth during neuronal differentiation. Phosphorylated by cyclin A/Cdk2 and p35-Cdk5 complexes and to a lesser extent by the cyclin D3/Cdk4 and cyclin B/Cdk1, in vitro. Dephosphorylated at Ser-330 by CDC14A and CDC14B around early anaphase. Acetylated by EP300; acetylation leads both to the decreased of SIRT2-mediated alpha-tubulin deacetylase activity and SIRT2-mediated down-regulation of TP53 transcriptional activity. Post-translationally, ubiquitinated. Expressed in the cerebellum, cerebral cortex and cervival spinal cord. Expressed in Purkinje cells, oligodendrocytes and Schwann cells (at protein level). Expressed in the central nervous system (CNS).

It localises to the nucleus. The protein localises to the cytoplasm. It is found in the perinuclear region. The protein resides in the cytoskeleton. Its subcellular location is the microtubule organizing center. It localises to the centrosome. The protein localises to the centriole. It is found in the spindle. The protein resides in the midbody. Its subcellular location is the chromosome. It localises to the perikaryon. The protein localises to the cell projection. It is found in the growth cone. The protein resides in the myelin membrane. It carries out the reaction N(6)-acetyl-L-lysyl-[protein] + NAD(+) + H2O = 2''-O-acetyl-ADP-D-ribose + nicotinamide + L-lysyl-[protein]. It catalyses the reaction N(6)-tetradecanoyl-L-lysyl-[protein] + NAD(+) + H2O = 2''-O-tetradecanoyl-ADP-D-ribose + nicotinamide + L-lysyl-[protein]. The enzyme catalyses N(6)-hexadecanoyl-L-lysyl-[protein] + NAD(+) + H2O = 2''-O-hexadecanoyl-ADP-D-ribose + nicotinamide + L-lysyl-[protein]. Its activity is regulated as follows. Inhibited by Sirtinol, A3 and M15 small molecules. Inhibited by nicotinamide. Inhibited by a macrocyclic peptide inhibitor S2iL5. Inhibited by EP300-induced acetylation. Its function is as follows. NAD-dependent protein deacetylase, which deacetylates internal lysines on histone and alpha-tubulin as well as many other proteins such as key transcription factors. Participates in the modulation of multiple and diverse biological processes such as cell cycle control, genomic integrity, microtubule dynamics, cell differentiation, metabolic networks, and autophagy. Plays a major role in the control of cell cycle progression and genomic stability. Functions in the antephase checkpoint preventing precocious mitotic entry in response to microtubule stress agents, and hence allowing proper inheritance of chromosomes. Positively regulates the anaphase promoting complex/cyclosome (APC/C) ubiquitin ligase complex activity by deacetylating CDC20 and FZR1, then allowing progression through mitosis. Associates both with chromatin at transcriptional start sites (TSSs) and enhancers of active genes. Plays a role in cell cycle and chromatin compaction through epigenetic modulation of the regulation of histone H4 'Lys-20' methylation (H4K20me1) during early mitosis. Specifically deacetylates histone H4 at 'Lys-16' (H4K16ac) between the G2/M transition and metaphase enabling H4K20me1 deposition by KMT5A leading to ulterior levels of H4K20me2 and H4K20me3 deposition throughout cell cycle, and mitotic S-phase progression. Deacetylates KMT5A modulating KMT5A chromatin localization during the mitotic stress response. Also deacetylates histone H3 at 'Lys-57' (H3K56ac) during the mitotic G2/M transition. During oocyte meiosis progression, may deacetylate histone H4 at 'Lys-16' (H4K16ac) and alpha-tubulin, regulating spindle assembly and chromosome alignment by influencing microtubule dynamics and kinetochore function. Deacetylates histone H4 at 'Lys-16' (H4K16ac) at the VEGFA promoter and thereby contributes to regulate expression of VEGFA, a key regulator of angiogenesis. Deacetylates alpha-tubulin at 'Lys-40' and hence controls neuronal motility, oligodendroglial cell arbor projection processes and proliferation of non-neuronal cells. Phosphorylation at Ser-368 by a G1/S-specific cyclin E-CDK2 complex inactivates SIRT2-mediated alpha-tubulin deacetylation, negatively regulating cell adhesion, cell migration and neurite outgrowth during neuronal differentiation. Deacetylates PARD3 and participates in the regulation of Schwann cell peripheral myelination formation during early postnatal development and during postinjury remyelination. Involved in several cellular metabolic pathways. Plays a role in the regulation of blood glucose homeostasis by deacetylating and stabilizing phosphoenolpyruvate carboxykinase PCK1 activity in response to low nutrient availability. Acts as a key regulator in the pentose phosphate pathway (PPP) by deacetylating and activating the glucose-6-phosphate G6PD enzyme, and therefore, stimulates the production of cytosolic NADPH to counteract oxidative damage. Maintains energy homeostasis in response to nutrient deprivation as well as energy expenditure by inhibiting adipogenesis and promoting lipolysis. Attenuates adipocyte differentiation by deacetylating and promoting FOXO1 interaction to PPARG and subsequent repression of PPARG-dependent transcriptional activity. Plays a role in the regulation of lysosome-mediated degradation of protein aggregates by autophagy in neuronal cells. Deacetylates FOXO1 in response to oxidative stress or serum deprivation, thereby negatively regulating FOXO1-mediated autophagy. Deacetylates a broad range of transcription factors and co-regulators regulating target gene expression. Deacetylates transcriptional factor FOXO3 stimulating the ubiquitin ligase SCF(SKP2)-mediated FOXO3 ubiquitination and degradation. Deacetylates HIF1A and therefore promotes HIF1A degradation and inhibition of HIF1A transcriptional activity in tumor cells in response to hypoxia. Deacetylates RELA in the cytoplasm inhibiting NF-kappaB-dependent transcription activation upon TNF-alpha stimulation. Inhibits transcriptional activation by deacetylating p53/TP53 and EP300. Also deacetylates EIF5A. Functions as a negative regulator on oxidative stress-tolerance in response to anoxia-reoxygenation conditions. Plays a role as tumor suppressor. In addition to protein deacetylase activity, also has activity toward long-chain fatty acyl groups and mediates protein-lysine demyristoylation and depalmitoylation of target proteins, such as ARF6 and KRAS, thereby regulating their association with membranes. This chain is NAD-dependent protein deacetylase sirtuin-2 (Sirt2), found in Rattus norvegicus (Rat).